The primary structure comprises 789 residues: Ribonucleoside-diphosphate reductase large subunit (789 aa).

Residues Thr-207, 222 to 223 (SC), Gly-253, 435 to 439 (NLCTE), and 620 to 624 (PTVSS) contribute to the substrate site. An intrachain disulfide couples Cys-223 to Cys-452. The active-site Proton acceptor is Asn-435. The active-site Cysteine radical intermediate is Cys-437. The active-site Proton acceptor is Glu-439.

It belongs to the ribonucleoside diphosphate reductase large chain family. As to quaternary structure, heterotetramer composed of a homodimer of the large subunit (R1) and a homodimer of the small subunit (R2). Larger multisubunit protein complex are also active, composed of (R1)n(R2)n.

The catalysed reaction is a 2'-deoxyribonucleoside 5'-diphosphate + [thioredoxin]-disulfide + H2O = a ribonucleoside 5'-diphosphate + [thioredoxin]-dithiol. Its function is as follows. Ribonucleoside-diphosphate reductase holoenzyme provides the precursors necessary for viral DNA synthesis. Allows virus growth in non-dividing cells, as well as reactivation from latency in infected hosts. Catalyzes the biosynthesis of deoxyribonucleotides from the corresponding ribonucleotides. The polypeptide is Ribonucleoside-diphosphate reductase large subunit (Equus caballus (Horse)).